Consider the following 392-residue polypeptide: MSAQAQMRAMLDQLMGTSRDGDTTRQRIKFSDDRVCKSHLLNCCPHDVLSGTRMDLGECLKVHDLALRADYEIASKEQDFFFELDAMDHLQSFIADCDRRTEVSKKRLAETQEEISAEVAAKAERVHELNEEIGKLLAKVEQLGAEGNVEESQKVMDEVEKARAKKREAEEVYRNSMPASSFQQQKLRVCEVCSAYLGLHDNDRRLADHFGGKLHLGFIEIREKLEELKRVVAEKQEKRNQERLKRREEREREEREKLRRSRSHSKNPKRSRSREHRRHRSRSMSRERKRRTRSKSREKRHRHRSRSSSRSRSRSHQRSRHSSRDRSRERSKRRSSKERFRDQDLASRDRDRSSRDRSPRDRDRKDKKRSYESANGRSEDRRSSEEREAGEI.

Residue S18 is modified to Phosphoserine. A coiled-coil region spans residues 102 to 177 (EVSKKRLAET…EAEEVYRNSM (76 aa)). Basic and acidic residues predominate over residues 235-257 (KQEKRNQERLKRREEREREEREK). Positions 235–392 (KQEKRNQERL…SSEEREAGEI (158 aa)) are disordered. A compositionally biased stretch (basic residues) spans 258-321 (LRRSRSHSKN…RSRSHQRSRH (64 aa)). 2 positions are modified to 5-hydroxylysine; by JMJD6: K266 and K269. 2 stretches are compositionally biased toward basic and acidic residues: residues 337-364 (KERFRDQDLASRDRDRSSRDRSPRDRDR) and 377-392 (RSEDRRSSEEREAGEI).

Belongs to the Luc7 family. In terms of assembly, interacts with SCNM1. As to expression, all isoforms are expressed in brain, kidney, heart, thymus, stomach, skeletal muscle, testis and spinal cord.

The protein resides in the nucleus speckle. Its subcellular location is the nucleus. It is found in the nucleoplasm. May bind to RNA via its Arg/Ser-rich domain. This Mus musculus (Mouse) protein is Putative RNA-binding protein Luc7-like 2 (Luc7l2).